Reading from the N-terminus, the 339-residue chain is Putative agmatine deiminase (339 aa).

Cys-331 functions as the Amidino-cysteine intermediate in the catalytic mechanism.

It belongs to the agmatine deiminase family.

It catalyses the reaction agmatine + H2O = N-carbamoylputrescine + NH4(+). The sequence is that of Putative agmatine deiminase from Streptomyces coelicolor (strain ATCC BAA-471 / A3(2) / M145).